The primary structure comprises 148 residues: Putative pre-16S rRNA nuclease (148 aa).

It belongs to the YqgF nuclease family.

It localises to the cytoplasm. Its function is as follows. Could be a nuclease involved in processing of the 5'-end of pre-16S rRNA. The sequence is that of Putative pre-16S rRNA nuclease from Nitrosomonas europaea (strain ATCC 19718 / CIP 103999 / KCTC 2705 / NBRC 14298).